We begin with the raw amino-acid sequence, 201 residues long: Transmembrane 4 L6 family member 18 (201 aa).

At 1–9 (MGSRKCGSC) the chain is on the cytoplasmic side. The helical transmembrane segment at 10 to 30 (LSSLLIPLALWSIIVNILLYF) threads the bilayer. The Extracellular portion of the chain corresponds to 31–49 (PNGQASYASSNKLTNYVWY). The helical transmembrane segment at 50-70 (FEGICFSGIMMLVVAAVLLVL) threads the bilayer. Over 71-93 (ENDNNYKCCQSENCSKKYMTVLS) the chain is Cytoplasmic. The helical transmembrane segment at 94–114 (MIFSALGIAFSGYCLVISALG) threads the bilayer. Residues 115 to 157 (LLQGPYCRTLDGWEYAFEGTAGRFLTDSREWIQCLEPAHVVEW) are Extracellular-facing. The chain crosses the membrane as a helical span at residues 158 to 178 (NIILFSILIALSGLQVIVCLI). At 179-201 (RVVIQLSKSLCGTYSVIIQPGII) the chain is on the cytoplasmic side.

The protein belongs to the L6 tetraspanin family.

It localises to the membrane. The sequence is that of Transmembrane 4 L6 family member 18 (TM4SF18) from Bos taurus (Bovine).